We begin with the raw amino-acid sequence, 221 residues long: Orotidine 5'-phosphate decarboxylase (221 aa).

Substrate is bound by residues D12, K34, 60–69 (DFKVADIPNT), S117, 170–180 (PGVGAQGGKAS), G193, and R194. Catalysis depends on K62, which acts as the Proton donor.

This sequence belongs to the OMP decarboxylase family. Type 1 subfamily. As to quaternary structure, homodimer.

The catalysed reaction is orotidine 5'-phosphate + H(+) = UMP + CO2. It functions in the pathway pyrimidine metabolism; UMP biosynthesis via de novo pathway; UMP from orotate: step 2/2. Functionally, catalyzes the decarboxylation of orotidine 5'-monophosphate (OMP) to uridine 5'-monophosphate (UMP). This Methanosarcina acetivorans (strain ATCC 35395 / DSM 2834 / JCM 12185 / C2A) protein is Orotidine 5'-phosphate decarboxylase.